The following is a 259-amino-acid chain: ATP synthase subunit a (259 aa).

Residues 1–7 constitute a propeptide, removed in mature form; that stretch reads MTNNYIN. A run of 5 helical transmembrane segments spans residues 36–56, 95–115, 125–145, 164–206, and 211–253; these read FSLY…LSIG, YVPL…IGMV, LIYI…LGLF, LVPV…NLVK, and INYF…SYLK.

As to quaternary structure, F-type ATP synthases have 2 components, the catalytic core F(1) and the membrane-embedded component F(0), linked together by a central stalk and a peripheral stalk. The central stalk, also called rotor shaft, is often seen as part of F(1). The peripheral stalk is seen as part of F(0). F(0) contains the membrane channel next to the rotor. F-type ATP synthases form dimers but each monomer functions independently in ATP generation. The dimer consists of 18 different polypeptides: ATP1 (subunit alpha, part of F(1), 3 molecules per monomer), ATP2 (subunit beta, part of F(1), 3 molecules per monomer), ATP3 (subunit gamma, part of the central stalk), ATP4 (subunit b, part of the peripheral stalk), ATP5/OSCP (subunit 5/OSCP, part of the peripheral stalk), ATP6 (subunit a, part of the peripheral stalk), ATP7 (subunit d, part of the peripheral stalk), ATP8 (subunit 8, part of the peripheral stalk), OLI1 (subunit c, part of the rotor, 10 molecules per monomer), ATP14 (subunit h, part of the peripheral stalk), ATP15 (subunit epsilon, part of the central stalk), ATP16 (subunit delta, part of the central stalk), ATP17 (subunit f, part of the peripheral stalk), ATP18 (subunit i/j, part of the peripheral stalk). Dimer-specific subunits are ATP19 (subunit k, at interface between monomers), ATP20 (subunit g, at interface between monomers), TIM11 (subunit e, at interface between monomers). Also contains subunit L.

It localises to the mitochondrion inner membrane. Functionally, mitochondrial membrane ATP synthase (F(1)F(0) ATP synthase or Complex V) produces ATP from ADP in the presence of a proton gradient across the membrane which is generated by electron transport complexes of the respiratory chain. F-type ATP synthases consist of two structural domains, F(1) - containing the extramembraneous catalytic core, and F(0) - containing the membrane proton channel, linked together by a central stalk and a peripheral stalk. During catalysis, ATP synthesis in the catalytic domain of F(1) is coupled via a rotary mechanism of the central stalk subunits to proton translocation. Key component of the proton channel; it may play a direct role in the translocation of protons across the membrane. In Pichia angusta (Yeast), this protein is ATP synthase subunit a.